The primary structure comprises 186 residues: Protein GrpE (186 aa).

Basic and acidic residues predominate over residues 1-22 (MSDSNKEKKKKFADMVSKRKGD). The segment at 1-35 (MSDSNKEKKKKFADMVSKRKGDDQEDQQTGDLSEE) is disordered. Over residues 23–34 (DQEDQQTGDLSE) the composition is skewed to acidic residues.

This sequence belongs to the GrpE family. Homodimer.

The protein localises to the cytoplasm. Participates actively in the response to hyperosmotic and heat shock by preventing the aggregation of stress-denatured proteins, in association with DnaK and GrpE. It is the nucleotide exchange factor for DnaK and may function as a thermosensor. Unfolded proteins bind initially to DnaJ; upon interaction with the DnaJ-bound protein, DnaK hydrolyzes its bound ATP, resulting in the formation of a stable complex. GrpE releases ADP from DnaK; ATP binding to DnaK triggers the release of the substrate protein, thus completing the reaction cycle. Several rounds of ATP-dependent interactions between DnaJ, DnaK and GrpE are required for fully efficient folding. The sequence is that of Protein GrpE from Wolbachia pipientis subsp. Culex pipiens (strain wPip).